A 303-amino-acid polypeptide reads, in one-letter code: Pseudouridine-5'-phosphate glycosidase (303 aa).

Glutamate 25 acts as the Proton donor in catalysis. 2 residues coordinate substrate: lysine 87 and valine 107. Aspartate 139 lines the Mn(2+) pocket. Position 141–143 (141–143 (SAD)) interacts with substrate. The active-site Nucleophile is lysine 160.

Belongs to the pseudouridine-5'-phosphate glycosidase family. Homotrimer. It depends on Mn(2+) as a cofactor.

It carries out the reaction D-ribose 5-phosphate + uracil = psi-UMP + H2O. Catalyzes the reversible cleavage of pseudouridine 5'-phosphate (PsiMP) to ribose 5-phosphate and uracil. Functions biologically in the cleavage direction, as part of a pseudouridine degradation pathway. The protein is Pseudouridine-5'-phosphate glycosidase of Hahella chejuensis (strain KCTC 2396).